We begin with the raw amino-acid sequence, 264 residues long: Phosphonoacetaldehyde hydrolase (264 aa).

Asp9 (nucleophile) is an active-site residue. Mg(2+) is bound by residues Asp9 and Ala11. Lys50 acts as the Schiff-base intermediate with substrate in catalysis. Asp183 is a binding site for Mg(2+).

This sequence belongs to the HAD-like hydrolase superfamily. PhnX family. Homodimer. The cofactor is Mg(2+).

It catalyses the reaction phosphonoacetaldehyde + H2O = acetaldehyde + phosphate + H(+). Functionally, involved in phosphonate degradation. This Bacillus cereus (strain AH187) protein is Phosphonoacetaldehyde hydrolase.